Consider the following 186-residue polypeptide: Ribosome-recycling factor (186 aa).

It belongs to the RRF family.

The protein resides in the cytoplasm. Responsible for the release of ribosomes from messenger RNA at the termination of protein biosynthesis. May increase the efficiency of translation by recycling ribosomes from one round of translation to another. The chain is Ribosome-recycling factor from Phocaeicola vulgatus (strain ATCC 8482 / DSM 1447 / JCM 5826 / CCUG 4940 / NBRC 14291 / NCTC 11154) (Bacteroides vulgatus).